We begin with the raw amino-acid sequence, 417 residues long: MAATAATTTSSHLLLSSSRHVASSSQPSILSPRSLFSNNGKRAPTGVRNHQYASGVRCMAVAADAAETKTAARKKSGYELQTLTGWLLRQEMKGEIDAELTIVMSSISLACKQIASLVQRAGISNLTGVQGAVNIQGEDQKKLDVISNEVFSNCLRSSGRTGIIASEEEDVPVAVEESYSGNYVVVFDPLDGSSNIDAAVSTGSIFGIYSPNDECIVDDSDDISALGSEEQRCIVNVCQPGNNLLAAGYCMYSSSVIFVLTLGKGVFSFTLDPMYGEFVLTQENIEIPKAGRIYSFNEGNYQMWDDKLKKYIDDLKDPGPTGKPYSARYIGSLVGDFHRTLLYGGIYGYPRDAKSKNGKLRLLYECAPMSFIVEQAGGKGSDGHSRVLDIQPTEIHQRVPLYIGSTEEVEKLEKYLA.

A chloroplast-targeting transit peptide spans 1–59 (MAATAATTTSSHLLLSSSRHVASSSQPSILSPRSLFSNNGKRAPTGVRNHQYASGVRCM). A compositionally biased stretch (low complexity) spans 24–35 (SSQPSILSPRSL). The segment at 24–48 (SSQPSILSPRSLFSNNGKRAPTGVR) is disordered. N-acetylalanine is present on alanine 60. Glutamate 138, glutamate 167, aspartate 188, leucine 190, and aspartate 191 together coordinate Mg(2+). 191-194 (DGSS) contacts substrate. A disulfide bond links cysteine 233 and cysteine 238. Positions 297, 329, 347, 349, and 359 each coordinate substrate. Glutamate 365 lines the Mg(2+) pocket.

This sequence belongs to the FBPase class 1 family. As to quaternary structure, homotetramer. Mg(2+) is required as a cofactor.

It is found in the plastid. The protein resides in the chloroplast stroma. The catalysed reaction is beta-D-fructose 1,6-bisphosphate + H2O = beta-D-fructose 6-phosphate + phosphate. It functions in the pathway carbohydrate biosynthesis; Calvin cycle. Its function is as follows. Catalyzes the irreversible reaction from fructose-1,6-bisphosphate to fructose-6-phosphate and inorganic phosphate, to regenerate the primary CO(2) acceptor molecule, ribulose-1,5-bisphosphate. Involved in the regulation of photosynthetic electron flow and sucrose synthesis. Its activity is critical for normal plant development and important for the regulation of a wide range of metabolic processes. The sequence is that of Fructose-1,6-bisphosphatase 1, chloroplastic from Arabidopsis thaliana (Mouse-ear cress).